The sequence spans 456 residues: Outer membrane protein assembly factor BamB (456 aa).

Positions 1 to 19 are cleaved as a signal peptide; the sequence is MKKLLFITAPLLLSVLTAS. The N-palmitoyl cysteine moiety is linked to residue Cys-20. Cys-20 carries S-diacylglycerol cysteine lipidation.

The protein belongs to the BamB family. In terms of assembly, part of the Bam complex.

The protein resides in the cell outer membrane. Its function is as follows. Part of the outer membrane protein assembly complex, which is involved in assembly and insertion of beta-barrel proteins into the outer membrane. The protein is Outer membrane protein assembly factor BamB of Francisella tularensis subsp. tularensis (strain SCHU S4 / Schu 4).